Consider the following 606-residue polypeptide: Glutamine--fructose-6-phosphate aminotransferase [isomerizing] (606 aa).

The active-site Nucleophile; for GATase activity is Cys-2. Residues Cys-2–Gly-218 enclose the Glutamine amidotransferase type-2 domain. 2 consecutive SIS domains span residues Phe-278 to Val-424 and Leu-448 to Pro-596. Lys-601 acts as the For Fru-6P isomerization activity in catalysis.

Homodimer.

It is found in the cytoplasm. It carries out the reaction D-fructose 6-phosphate + L-glutamine = D-glucosamine 6-phosphate + L-glutamate. Catalyzes the first step in hexosamine metabolism, converting fructose-6P into glucosamine-6P using glutamine as a nitrogen source. The chain is Glutamine--fructose-6-phosphate aminotransferase [isomerizing] from Chlamydia trachomatis serovar D (strain ATCC VR-885 / DSM 19411 / UW-3/Cx).